We begin with the raw amino-acid sequence, 932 residues long: Glycine dehydrogenase (decarboxylating) (932 aa).

At lysine 685 the chain carries N6-(pyridoxal phosphate)lysine.

Belongs to the GcvP family. In terms of assembly, the glycine cleavage system is composed of four proteins: P, T, L and H. The cofactor is pyridoxal 5'-phosphate.

The catalysed reaction is N(6)-[(R)-lipoyl]-L-lysyl-[glycine-cleavage complex H protein] + glycine + H(+) = N(6)-[(R)-S(8)-aminomethyldihydrolipoyl]-L-lysyl-[glycine-cleavage complex H protein] + CO2. The glycine cleavage system catalyzes the degradation of glycine. The P protein binds the alpha-amino group of glycine through its pyridoxal phosphate cofactor; CO(2) is released and the remaining methylamine moiety is then transferred to the lipoamide cofactor of the H protein. This is Glycine dehydrogenase (decarboxylating) from Brucella canis (strain ATCC 23365 / NCTC 10854 / RM-666).